A 216-amino-acid chain; its full sequence is MTSSSCPRASLNYRPAMKASDVDPDAEYAVPLEHFDVEVSPYTVFERGGTCVRVSGRRLACLLRNGSRGESAPAPAAAAASAGQPGRKRSCKNVCFKGATSRRELERTLTARVNLPPCMTGLLRQFEIRNRGDRYRKRFVFNCYLINTTTCTACDRRCFVNAAAVLYERDEKCVREMMSLLRREDCYKPPNCSKMSQESLCFKSGACRGTNPLCNF.

Residues 67–88 are disordered; the sequence is SRGESAPAPAAAAASAGQPGRK. Over residues 71-82 the composition is skewed to low complexity; that stretch reads SAPAPAAAAASA.

It belongs to the baculoviridae LEF-2 family.

Required for late and very late gene expression. Specifically required for expression from the vp39 and polh promoters. The sequence is that of Late expression factor 2 (LEF-2) from Lepidoptera (butterflies and moths).